Reading from the N-terminus, the 155-residue chain is Cyanate hydratase (155 aa).

Residues R95, E98, and S121 contribute to the active site.

The protein belongs to the cyanase family.

The catalysed reaction is cyanate + hydrogencarbonate + 3 H(+) = NH4(+) + 2 CO2. Catalyzes the reaction of cyanate with bicarbonate to produce ammonia and carbon dioxide. The chain is Cyanate hydratase from Pseudomonas syringae pv. syringae (strain B728a).